Reading from the N-terminus, the 290-residue chain is UPF0046 protein K07C11.7 (290 aa).

The first 22 residues, 1–22 (MFHFSIGTVLISICWLAQWMEA), serve as a signal peptide directing secretion. Residue Asn204 is glycosylated (N-linked (GlcNAc...) asparagine).

The protein belongs to the UPF0046 family.

The protein is UPF0046 protein K07C11.7 of Caenorhabditis elegans.